A 544-amino-acid polypeptide reads, in one-letter code: 4-coumarate:CoA ligase 1 (544 aa).

The protein belongs to the ATP-dependent AMP-binding enzyme family. Monomer. In terms of tissue distribution, mostly expressed in flower organs, with highest levels in corollas, and, to a lesser extent, in tubes, sepals, pistils, stamen and ovaries. Also present at low levels in leaves.

It localises to the cytoplasm. Its subcellular location is the cytosol. The catalysed reaction is (E)-4-coumarate + ATP + CoA = (E)-4-coumaroyl-CoA + AMP + diphosphate. It carries out the reaction (E)-caffeate + ATP + CoA = (E)-caffeoyl-CoA + AMP + diphosphate. It catalyses the reaction benzoate + ATP + CoA = benzoyl-CoA + AMP + diphosphate. The enzyme catalyses (E)-cinnamate + ATP + CoA = (E)-cinnamoyl-CoA + AMP + diphosphate. The catalysed reaction is (E)-ferulate + ATP + CoA = (E)-feruloyl-CoA + AMP + diphosphate. It functions in the pathway phenylpropanoid metabolism; trans-cinnamate biosynthesis. Its pathway is phytoalexin biosynthesis; 3,4',5-trihydroxystilbene biosynthesis; 3,4',5-trihydroxystilbene from trans-4-coumarate: step 1/2. Catalyzes the formation of CoA esters of trans-cinnamic acid, 4-coumaric acid, ferulic acid, benzoic acid and caffeic acid. This chain is 4-coumarate:CoA ligase 1, found in Petunia hybrida (Petunia).